The sequence spans 90 residues: DNA-directed RNA polymerase subunit omega (90 aa).

The segment at glutamine 70–arginine 90 is disordered.

This sequence belongs to the RNA polymerase subunit omega family. In terms of assembly, the RNAP catalytic core consists of 2 alpha, 1 beta, 1 beta' and 1 omega subunit. When a sigma factor is associated with the core the holoenzyme is formed, which can initiate transcription.

The enzyme catalyses RNA(n) + a ribonucleoside 5'-triphosphate = RNA(n+1) + diphosphate. Promotes RNA polymerase assembly. Latches the N- and C-terminal regions of the beta' subunit thereby facilitating its interaction with the beta and alpha subunits. In Vibrio cholerae serotype O1 (strain ATCC 39541 / Classical Ogawa 395 / O395), this protein is DNA-directed RNA polymerase subunit omega.